The sequence spans 395 residues: [LysW]-aminoadipate semialdehyde transaminase (395 aa).

Pyridoxal 5'-phosphate contacts are provided by residues 113 to 114 (GT) and Phe-140. Residue Arg-143 participates in substrate binding. 225 to 228 (DEIQ) is a binding site for pyridoxal 5'-phosphate. An N6-(pyridoxal phosphate)lysine modification is found at Lys-254. A substrate-binding site is contributed by Thr-282. Thr-283 contributes to the pyridoxal 5'-phosphate binding site.

The protein belongs to the class-III pyridoxal-phosphate-dependent aminotransferase family. LysJ subfamily. In terms of assembly, homodimer. It depends on pyridoxal 5'-phosphate as a cofactor.

Its subcellular location is the cytoplasm. It catalyses the reaction [amino-group carrier protein]-C-terminal-gamma-(L-lysyl)-L-glutamate + 2-oxoglutarate = [amino-group carrier protein]-C-terminal-N-(1-carboxy-5-oxopentan-1-yl)-L-glutamine + L-glutamate. It functions in the pathway amino-acid biosynthesis; L-lysine biosynthesis via AAA pathway; L-lysine from L-alpha-aminoadipate (Thermus route): step 4/5. Its function is as follows. Catalyzes the transfer of the amino group of L-glutamate to [LysW]-aminoadipate 6-semialdehyde, generating [LysW]-gamma-L-lysine. This Thermus thermophilus (strain ATCC 27634 / DSM 579 / HB8) protein is [LysW]-aminoadipate semialdehyde transaminase.